Reading from the N-terminus, the 159-residue chain is Neuroglobin (159 aa).

One can recognise a Globin domain in the interval 3 to 151 (KLSEKDKELI…VVAAMSQGWA (149 aa)). Heme b is bound by residues histidine 66 and histidine 98.

This sequence belongs to the globin family. As to quaternary structure, monomer. Homodimers and homotetramers. Mainly monomeric but also detected as part of homodimers and homotetramers.

It localises to the cytoplasm. The protein resides in the cytosol. It is found in the mitochondrion matrix. It carries out the reaction Fe(III)-heme b-[protein] + nitric oxide + H2O = Fe(II)-heme b-[protein] + nitrite + 2 H(+). In terms of biological role, monomeric globin with a bis-histidyl six-coordinate heme-iron atom through which it can bind dioxygen, carbon monoxide and nitric oxide. Could help transport oxygen and increase its availability to the metabolically active neuronal tissues, though its low quantity in tissues as well as its high affinity for dioxygen, which may limit its oxygen-releasing ability, argue against it. The ferrous/deoxygenated form exhibits a nitrite reductase activity and it could produce nitric oxide which in turn inhibits cellular respiration in response to hypoxia. In its ferrous/deoxygenated state, it may also exhibit GDI (Guanine nucleotide Dissociation Inhibitor) activity toward heterotrimeric G-alpha proteins, thereby regulating signal transduction to facilitate neuroprotective responses in the wake of hypoxia and associated oxidative stress. The sequence is that of Neuroglobin (ngb) from Chaenocephalus aceratus (Blackfin icefish).